Here is a 461-residue protein sequence, read N- to C-terminus: Probable ornithine decarboxylase (461 aa).

The disordered stretch occupies residues 1 to 35 (MTGTKRNGEEVVNENNNNNVAEETNKKAKVDESST). Residues 13-22 (NENNNNNVAE) are compositionally biased toward low complexity. Over residues 23 to 32 (ETNKKAKVDE) the composition is skewed to basic and acidic residues. At K116 the chain carries N6-(pyridoxal phosphate)lysine. Pyridoxal 5'-phosphate is bound by residues S247, G284, and 317 to 320 (EPGR). 375-376 (FD) provides a ligand contact to substrate. C402 acts as the Proton donor; shared with dimeric partner in catalysis. Substrate is bound at residue D403. Pyridoxal 5'-phosphate is bound at residue Y431.

This sequence belongs to the Orn/Lys/Arg decarboxylase class-II family. Homodimer. Only the dimer is catalytically active, as the active sites are constructed of residues from both monomers. Requires pyridoxal 5'-phosphate as cofactor.

It catalyses the reaction L-ornithine + H(+) = putrescine + CO2. It functions in the pathway amine and polyamine biosynthesis; putrescine biosynthesis via L-ornithine pathway; putrescine from L-ornithine: step 1/1. With respect to regulation, inhibited by antizyme (AZ) in response to polyamine levels. AZ inhibits the assembly of the functional homodimer by binding to ODC monomers and targeting them for ubiquitin-independent proteolytic destruction by the 26S proteasome. Functionally, catalyzes the first and rate-limiting step of polyamine biosynthesis that converts ornithine into putrescine, which is the precursor for the polyamines, spermidine and spermine. Polyamines are essential for cell proliferation and are implicated in cellular processes, ranging from DNA replication to apoptosis. The protein is Probable ornithine decarboxylase (odc) of Dictyostelium discoideum (Social amoeba).